The chain runs to 268 residues: Leucyl/phenylalanyl-tRNA--protein transferase (268 aa).

This sequence belongs to the L/F-transferase family.

Its subcellular location is the cytoplasm. It catalyses the reaction N-terminal L-lysyl-[protein] + L-leucyl-tRNA(Leu) = N-terminal L-leucyl-L-lysyl-[protein] + tRNA(Leu) + H(+). The catalysed reaction is N-terminal L-arginyl-[protein] + L-leucyl-tRNA(Leu) = N-terminal L-leucyl-L-arginyl-[protein] + tRNA(Leu) + H(+). It carries out the reaction L-phenylalanyl-tRNA(Phe) + an N-terminal L-alpha-aminoacyl-[protein] = an N-terminal L-phenylalanyl-L-alpha-aminoacyl-[protein] + tRNA(Phe). Functions in the N-end rule pathway of protein degradation where it conjugates Leu, Phe and, less efficiently, Met from aminoacyl-tRNAs to the N-termini of proteins containing an N-terminal arginine or lysine. The chain is Leucyl/phenylalanyl-tRNA--protein transferase from Psychrobacter arcticus (strain DSM 17307 / VKM B-2377 / 273-4).